A 1066-amino-acid polypeptide reads, in one-letter code: Pumilio homolog 2 (1066 aa).

The tract at residues 1–260 (MNHDFQALAL…ATVGLFDYNS (260 aa)) is interaction with SNAPIN. A phosphoserine mark is found at Ser67, Ser82, and Ser102. Residues 106–204 (KLDSRFRKGN…NPSEGLGPLP (99 aa)) are disordered. Positions 119 to 133 (RDAETDGPEKGDQKG) are enriched in basic and acidic residues. 3 positions are modified to phosphoserine: Ser136, Ser178, and Ser182. Phosphothreonine occurs at positions 184 and 396. A disordered region spans residues 494-553 (STNGLFRPIGTQPPQQQQQQPSTNLQSNSFYGSSSLTNSSQSSSLFSHGPGQPGSTSLGF). Residues 505–514 (QPPQQQQQQP) are compositionally biased toward low complexity. Polar residues predominate over residues 515–525 (STNLQSNSFYG). Over residues 526 to 540 (SSSLTNSSQSSSLFS) the composition is skewed to low complexity. Residues Ser587 and Ser592 each carry the phosphoserine modification. A disordered region spans residues 620-650 (SPIGMPLPSQTPGHSLTPPPSLSSHGSSSSL). Low complexity predominate over residues 630-650 (TPGHSLTPPPSLSSHGSSSSL). Arg674 is subject to Omega-N-methylarginine. Phosphoserine occurs at positions 684 and 700. In terms of domain architecture, PUM-HD spans 706 to 1048 (GRSRLLEDFR…HILAKLEKYY (343 aa)). Pumilio repeat units follow at residues 726–761 (DLIGHIVEFSQDQHGSRFIQQKLERATPAERQMVFN), 762–797 (EILQAAYQLMTDVFGNYVIQKFFEFGSLDQKLALAT), 798–835 (RIRGHVLPLALQMYGCRVIQKALESISSDQQVISEMVK), 836–871 (ELDGHVLKCVKDQNGNHVVQKCIECVQPQSLQFIID), 872–907 (AFKGQVFVLSTHPYGCRVIQRILEHCTAEQTLPILE), 908–943 (ELHQHTEQLVQDQYGNYVIQHVLEHGRPEDKSKIVS), 944–979 (EIRGKVLALSQHKFASNVVEKCVTHASRAERALLID), and 983–1022 (CQNDGPHSALYTMMKDQYANYVVQKMIDMAEPAQRKIIMH). The adenine-nucleotide binding in RNA target stretch occupies residues 741–745 (SRFIQ). Residues 777–781 (NYVIQ) are uracil-nucleotide binding in RNA target. An adenine-nucleotide binding in RNA target region spans residues 813 to 817 (CRVIQ). Residues 851 to 855 (NHVVQ) are non-specific-nucleotide binding in RNA target. Residues 887–891 (CRVIQ) are adenine-nucleotide binding in RNA target. The tract at residues 923–927 (NYVIQ) is uracil-nucleotide binding in RNA target. A guanine-nucleotide binding in RNA target region spans residues 959–963 (SNVVE). Positions 1002 to 1006 (NYVVQ) are uracil-nucleotide binding in RNA target.

In terms of assembly, homodimer; homodimerizes in vitro. Interacts with DAZ1, DAZL and NANOS1 via its pumilio repeats. Interacts with NANOS3. Interacts with SNAPIN. Recruits the CCR4-POP2-NOT deadenylase leading to translational inhibition and mRNA degradation. Interacts with DDX20. In case of viral infection, interacts with DHX58. Interacts with TRIM71 (via NHL repeats) in an RNA-dependent manner. In terms of tissue distribution, expressed in male germ cells of adult testis (at protein level). Highly expressed in testis and ovary. Predominantly expressed in stem cells and germ cells. Expressed at lower level in brain, heart, kidney, liver, muscle, placenta, intestine and stomach Expressed in cerebellum, corpus callosum, caudate nucleus, hippocampus, medulla oblongata and putamen. Expressed in all fetal tissues tested.

It is found in the cytoplasm. Its subcellular location is the cytoplasmic granule. It localises to the perinuclear region. Its function is as follows. Sequence-specific RNA-binding protein that acts as a post-transcriptional repressor by binding the 3'-UTR of mRNA targets. Binds to an RNA consensus sequence, the Pumilio Response Element (PRE), 5'-UGUANAUA-3', that is related to the Nanos Response Element (NRE) (, PubMed:21397187). Mediates post-transcriptional repression of transcripts via different mechanisms: acts via direct recruitment of the CCR4-POP2-NOT deadenylase leading to translational inhibition and mRNA degradation. Also mediates deadenylation-independent repression by promoting accessibility of miRNAs. Acts as a post-transcriptional repressor of E2F3 mRNAs by binding to its 3'-UTR and facilitating miRNA regulation. Plays a role in cytoplasmic sensing of viral infection. Represses a program of genes necessary to maintain genomic stability such as key mitotic, DNA repair and DNA replication factors. Its ability to repress those target mRNAs is regulated by the lncRNA NORAD (non-coding RNA activated by DNA damage) which, due to its high abundance and multitude of PUMILIO binding sites, is able to sequester a significant fraction of PUM1 and PUM2 in the cytoplasm. May regulate DCUN1D3 mRNA levels. May support proliferation and self-renewal of stem cells. Binds specifically to miRNA MIR199A precursor, with PUM1, regulates miRNA MIR199A expression at a postranscriptional level. In Homo sapiens (Human), this protein is Pumilio homolog 2 (PUM2).